A 552-amino-acid polypeptide reads, in one-letter code: MRSDIVKKGIEKAPHRSLFKAMGYTDEELERPLIGVANSKSEIIPGHIHLDKLTEAVKAGIRMAGGTPIEFGAIGVCDGIAMGHTGMKYSLATRELIADSCEAMSKAHSFDGMVFIPNCDKIVPGMLMAAARINIPSIVISGGPMLSLNRDGKQLDLNSLFEAVGSYKAGTMTKEEVDDIEDHACPGCGSCSGMFTANSMNCLTEVLGMGLTGNGTIPAVYAERIRLAKYAGMKIMELVEKDIKPSDILTNEAFENALTVDMALGCSTNSVLHLPAIANELGIEINLDIINEISSRTPNLCKLAPAGKYHIQDLYSAGGVQAVMSELAKKDLLHLDLVTATGKTIRENIQNAKVKDYEIVKSIDTPYSATGGIAVLRGNIAPDGAVVKKSAVAEKMLIHTGPARVFDSEDEAITAIYSGQINKGDVVIIRYEGPKGGPGMREMLSPTSAIAGMGLDSDVALITDGRFSGASRGASIGHVSPEAMEGGPIALVQEGDIVDIDIPAGRINIQVTNEEMVKRKESWKAPKPKITTGYLGRYARLVTSASTGAVLK.

A Mg(2+)-binding site is contributed by D78. [2Fe-2S] cluster is bound at residue C119. Mg(2+) is bound by residues D120 and K121. K121 carries the post-translational modification N6-carboxylysine. C191 is a [2Fe-2S] cluster binding site. E442 is a Mg(2+) binding site. S468 serves as the catalytic Proton acceptor.

It belongs to the IlvD/Edd family. As to quaternary structure, homodimer. The cofactor is [2Fe-2S] cluster. Mg(2+) serves as cofactor.

The enzyme catalyses (2R)-2,3-dihydroxy-3-methylbutanoate = 3-methyl-2-oxobutanoate + H2O. The catalysed reaction is (2R,3R)-2,3-dihydroxy-3-methylpentanoate = (S)-3-methyl-2-oxopentanoate + H2O. It functions in the pathway amino-acid biosynthesis; L-isoleucine biosynthesis; L-isoleucine from 2-oxobutanoate: step 3/4. Its pathway is amino-acid biosynthesis; L-valine biosynthesis; L-valine from pyruvate: step 3/4. In terms of biological role, functions in the biosynthesis of branched-chain amino acids. Catalyzes the dehydration of (2R,3R)-2,3-dihydroxy-3-methylpentanoate (2,3-dihydroxy-3-methylvalerate) into 2-oxo-3-methylpentanoate (2-oxo-3-methylvalerate) and of (2R)-2,3-dihydroxy-3-methylbutanoate (2,3-dihydroxyisovalerate) into 2-oxo-3-methylbutanoate (2-oxoisovalerate), the penultimate precursor to L-isoleucine and L-valine, respectively. This Ruminiclostridium cellulolyticum (strain ATCC 35319 / DSM 5812 / JCM 6584 / H10) (Clostridium cellulolyticum) protein is Dihydroxy-acid dehydratase.